Reading from the N-terminus, the 217-residue chain is Probable transaldolase (217 aa).

The active-site Schiff-base intermediate with substrate is the Lys-83.

Belongs to the transaldolase family. Type 3B subfamily.

It localises to the cytoplasm. The catalysed reaction is D-sedoheptulose 7-phosphate + D-glyceraldehyde 3-phosphate = D-erythrose 4-phosphate + beta-D-fructose 6-phosphate. Its pathway is carbohydrate degradation; pentose phosphate pathway; D-glyceraldehyde 3-phosphate and beta-D-fructose 6-phosphate from D-ribose 5-phosphate and D-xylulose 5-phosphate (non-oxidative stage): step 2/3. Transaldolase is important for the balance of metabolites in the pentose-phosphate pathway. This is Probable transaldolase from Erythrobacter litoralis (strain HTCC2594).